The following is a 257-amino-acid chain: 5'-nucleotidase SurE (257 aa).

Asp-8, Asp-9, Ser-40, and Asn-92 together coordinate a divalent metal cation.

The protein belongs to the SurE nucleotidase family. The cofactor is a divalent metal cation.

The protein resides in the cytoplasm. It catalyses the reaction a ribonucleoside 5'-phosphate + H2O = a ribonucleoside + phosphate. In terms of biological role, nucleotidase that shows phosphatase activity on nucleoside 5'-monophosphates. This is 5'-nucleotidase SurE from Rhizobium leguminosarum bv. trifolii (strain WSM2304).